The primary structure comprises 93 residues: UPF0358 protein lmo1070 (93 aa).

This sequence belongs to the UPF0358 family.

The polypeptide is UPF0358 protein lmo1070 (Listeria monocytogenes serovar 1/2a (strain ATCC BAA-679 / EGD-e)).